The following is a 102-amino-acid chain: Exocrine gland-secreted peptide 1 (102 aa).

The first 22 residues, 1–22 (MTSLPVLLFLIILLLPSMITEG), serve as a signal peptide directing secretion. An intrachain disulfide couples Cys-63 to Cys-95.

This sequence belongs to the exocrine gland-secreted peptide family. Monomer. In terms of tissue distribution, expressed in the extraorbital lacrimal gland from where it is secreted into tears.

Its subcellular location is the secreted. Its function is as follows. Male-specific phermone which is recognized by the Vmn2r116/V2rp5 receptor in the vomeronasal organ (VNO) and enhances female sexual receptive behavior (lordosis) upon male mounting, resulting in successful copulation. The sequence is that of Exocrine gland-secreted peptide 1 from Mus musculus (Mouse).